We begin with the raw amino-acid sequence, 404 residues long: Glycerol-1-phosphate dehydrogenase [NAD(P)+] (404 aa).

NAD(+) is bound by residues Asp-56, 118–122 (GTIHD), and 140–143 (TAPS). Position 145 (Asp-145) interacts with substrate. Ser-149 contacts NAD(+). Residue Asp-192 coordinates substrate. Residues Asp-192 and His-272 each contribute to the Ni(2+) site. Position 276 (His-276) interacts with substrate. His-292 provides a ligand contact to Ni(2+).

Belongs to the glycerol-1-phosphate dehydrogenase family. As to quaternary structure, homodimer. Ni(2+) is required as a cofactor.

The protein resides in the cytoplasm. It carries out the reaction sn-glycerol 1-phosphate + NAD(+) = dihydroxyacetone phosphate + NADH + H(+). The catalysed reaction is sn-glycerol 1-phosphate + NADP(+) = dihydroxyacetone phosphate + NADPH + H(+). Its function is as follows. Catalyzes the NAD(P)H-dependent reduction of dihydroxyacetonephosphate (DHAP or glycerone phosphate) to glycerol 1-phosphate (G1P). The G1P thus generated is probably used for the synthesis of phosphoglycerolipids in Gram-positive bacterial species. The sequence is that of Glycerol-1-phosphate dehydrogenase [NAD(P)+] from Geobacillus stearothermophilus (Bacillus stearothermophilus).